A 93-amino-acid polypeptide reads, in one-letter code: Small ribosomal subunit protein uS19c (93 aa).

This sequence belongs to the universal ribosomal protein uS19 family.

The protein localises to the plastid. The protein resides in the chloroplast. In terms of biological role, protein S19 forms a complex with S13 that binds strongly to the 16S ribosomal RNA. The sequence is that of Small ribosomal subunit protein uS19c from Lolium perenne (Perennial ryegrass).